The following is a 250-amino-acid chain: Glycerol-1-phosphate phosphohydrolase 1 (250 aa).

Aspartate 18 acts as the Nucleophile in catalysis. Mg(2+) is bound by residues aspartate 18 and aspartate 20. Residue aspartate 20 is the Proton donor of the active site. A Glycyl lysine isopeptide (Lys-Gly) (interchain with G-Cter in SUMO); alternate cross-link involves residue lysine 64. Lysine 64 is covalently cross-linked (Glycyl lysine isopeptide (Lys-Gly) (interchain with G-Cter in ubiquitin); alternate). The residue at position 90 (serine 90) is a Phosphoserine. Lysine 144 is covalently cross-linked (Glycyl lysine isopeptide (Lys-Gly) (interchain with G-Cter in ubiquitin)). Aspartate 179 contacts Mg(2+).

The protein belongs to the HAD-like hydrolase superfamily. DOG/GPP family. Monomer. Requires Mg(2+) as cofactor.

Its subcellular location is the cytoplasm. The protein localises to the nucleus. The enzyme catalyses sn-glycerol 1-phosphate + H2O = glycerol + phosphate. It carries out the reaction sn-glycerol 3-phosphate + H2O = glycerol + phosphate. In terms of biological role, major isoform of glycerol-1-phosphate phosphohydrolase involved in glycerol biosynthesis. Plays a role in osmoadaptation and required for adaptation to anaerobic conditions. The chain is Glycerol-1-phosphate phosphohydrolase 1 from Saccharomyces cerevisiae (strain ATCC 204508 / S288c) (Baker's yeast).